The primary structure comprises 457 residues: PDZ and LIM domain protein 7 (457 aa).

A PDZ domain is found at 1–85 (MDSFKVVLEG…RLSLGLSRAQ (85 aa)). S78 is modified (phosphoserine). 2 disordered regions span residues 82–166 (SRAQ…QSRS) and 186–226 (FMKK…PWAV). Position 96 is a phosphothreonine (T96). R103 is modified (asymmetric dimethylarginine). S111 is modified (phosphoserine). The span at 126–135 (DSTLRQNGQL) shows a compositional bias: polar residues. Basic and acidic residues predominate over residues 144–157 (SKQRLMEDTEDWRP). S247 is modified (phosphoserine). LIM zinc-binding domains lie at 280–338 (PVCH…VRYA), 339–398 (PNCA…MFGT), and 399–457 (KCRG…FSHV).

Specifically binds via its LIM zinc-binding 3 domain (LIM 3) domain to endocytic codes of INSR, but not with those of IGF1R, LDLR, TFRC, or EGFR. Interacts with various PKC isoforms through the LIM zinc-binding domains. Binds to RET in a phosphorylation-independent manner via its LIM zinc-binding domain 2 (LIM 2). Probably part of a complex with SHC and the RET dimer. Interacts with TPM2, TBX4 and TBX5.

It localises to the cytoplasm. The protein localises to the cytoskeleton. May function as a scaffold on which the coordinated assembly of proteins can occur. May play a role as an adapter that, via its PDZ domain, localizes LIM-binding proteins to actin filaments of both skeletal muscle and nonmuscle tissues. Involved in both of the two fundamental mechanisms of bone formation, direct bone formation (e.g. embryonic flat bones mandible and cranium), and endochondral bone formation (e.g. embryonic long bone development). Plays a role during fracture repair. Involved in BMP6 signaling pathway. The chain is PDZ and LIM domain protein 7 (Pdlim7) from Mus musculus (Mouse).